The following is a 6793-amino-acid chain: Replicase polyprotein 1ab (6793 aa).

One can recognise a CoV Nsp1 globular domain in the interval 2-109 (ASNHISLAFA…ELDLVFGRCG (108 aa)). In terms of domain architecture, CoV Nsp2 N-terminal spans 112–368 (TIPVDQFMCG…TKFKFQLLAN (257 aa)). The 390-residue stretch at 396–785 (ILGLPWFVKK…LDTVTSFIKV (390 aa)) folds into the CoV Nsp2 middle domain. The CoV Nsp2 C-terminal domain maps to 776 to 897 (LDTVTSFIKV…VASCFKKKGG (122 aa)). A Ubiquitin-like 1 domain is found at 898–993 (GVVTISDEVQ…IMVSQWPLSS (96 aa)). The Peptidase C16 1 domain occupies 1069–1302 (AFIEDKPVVV…SCDVKPFLTY (234 aa)). The For PL1-PRO activity role is filled by C1103. Residues 1174 to 1205 (CGCGPGVRVYENAIFRFTPLKTAFPMGRCLIC) form a C4-type 1; degenerate zinc finger. Active-site for PL1-PRO activity residues include H1252 and D1265. Positions 1303–1467 (KNIEFYQGEL…FQTEQPVEPL (165 aa)) constitute a Macro domain. One can recognise a Ubiquitin-like 2 domain in the interval 1638 to 1693 (AKPVQVVVTQDQRSFHTVELSTSQTYGQQLGDCVVEDKKVTNLKPVSKDKVVSVVP). The region spanning 1699–1965 (KHYGFVDAGI…FLDTMNVASE (267 aa)) is the Peptidase C16 2 domain. Residue C1737 is the For PL2-PRO activity of the active site. The C4-type 2; degenerate zinc-finger motif lies at 1816–1849 (TTCDGTCSTKRVVSTPVVNASVLKVGLDDGNCVH). Active-site for PL2-PRO activity residues include H1902 and D1915. 2 helical membrane-spanning segments follow: residues 1973-1993 (FVSRNIIVLIVYLFSLLAICF) and 2036-2056 (YIKVFLKFSLVLYTLYALMFM). The interval 1973-2184 (FVSRNIIVLI…MGNIIVVAFI (212 aa)) is HD1. The 3Ecto domain occupies 2052–2116 (ALMFMFIRFT…TRVIWQHLKD (65 aa)). Intrachain disulfides connect C2068/C2094 and C2086/C2091. 3 helical membrane-spanning segments follow: residues 2119-2139 (IGNILPLFYLVFLIIFGGFFV), 2141-2161 (IGITYFIMQYINAAGVALGYQ), and 2164-2184 (VWLLHLLPFNSMGNIIVVAFI). The interval 2190–2280 (LFLKHVLFGC…VTKLNVIPTG (91 aa)) is Y1. Residues 2190–2530 (LFLKHVLFGC…PTISVANKKG (341 aa)) form the CoV Nsp3 Y domain. Positions 2194, 2199, 2204, 2207, 2240, 2243, 2247, and 2250 each coordinate Zn(2+). The interval 2194–2207 (HVLFGCDKPSCIAC) is ZF1. The interval 2240–2250 (CKKHNFFCVDC) is ZF2. Residues 2281–2370 (PATIIIDKVE…LVDSALLASL (90 aa)) are Y2. The interval 2281-2530 (PATIIIDKVE…PTISVANKKG (250 aa)) is coV-Y. A Y3 region spans residues 2371–2428 (NVDFSANLHKAFVEVLSNSFGKDLSNCSNMNECRESLGLSDVPEEEFSAAVSEAHRYD). Positions 2429–2530 (VLISDVSFNN…PTISVANKKG (102 aa)) are Y4. Helical transmembrane passes span 2543 to 2563 (FFWHLCVLIVVLFVATSLLDF), 2634 to 2654 (VPAGVFLYGKSLIFAMSTIFG), 2669 to 2689 (DSCIFNSACTTLSGIGGRNVY), 2769 to 2789 (GSDYVCGTGFFSLLFNVIGMF), 2802 to 2822 (ILLNCVVAFTAVMACFAFTKF), 2829 to 2849 (MSFGVLSVGLCTVVNNLSYVV), and 2878 to 2898 (VGFAISYCFLAPWWVVLAYLI). The segment at 2543–2898 (FFWHLCVLIV…PWWVVLAYLI (356 aa)) is HD2. Residues 2917–3012 (LFEGDKFVGS…PTVSYNSTLQ (96 aa)) enclose the Nsp4C domain. A Peptidase C30 domain is found at 3013 to 3314 (AGLRKMAQPS…VKQMYGVTLQ (302 aa)). Active-site for 3CL-PRO activity residues include H3053 and C3156. 7 helical membrane passes run 3351–3371 (GYITPVFLAIIVASSALMLLV), 3376–3396 (LFLQLYLLPSLCIVSGYNIFK), 3414–3434 (FGGFNVTGVLNISLCCFVMGL), 3443–3463 (PNKIFSYVVAVLTVLYTYYYS), 3466–3486 (VLGLILTSMSGFTNYWFIGTA), 3488–3507 (YKLATYVLPHTSLLDSFDAI), and 3511–3531 (VFLYLLLGYCNCVYYGSLYWI). The segment at 3351 to 3531 (GYITPVFLAI…CVYYGSLYWI (181 aa)) is HD3. One can recognise a RdRp Nsp7 cofactor domain in the interval 3591–3673 (SKLTDLKCTN…SYFNDSSVLQ (83 aa)). The region spanning 3674-3868 (SVAATYVNLP…LNCERIIKLQ (195 aa)) is the RdRp Nsp8 cofactor domain. The region spanning 3869-3976 (NNEIIPSKIK…GFIGATVRLQ (108 aa)) is the Nsp9 ssRNA-binding domain. An ExoN/MTase coactivator domain is found at 3977 to 4115 (AGKQTEQATN…DRAVIQSVDS (139 aa)). Zn(2+) is bound by residues C4050, C4053, H4059, C4066, C4092, C4095, C4103, and C4105. Zinc fingers lie at residues 4050 to 4066 (CLYCRAHVEHPDMDGFC) and 4092 to 4105 (CKVCGCWQANGCTC). The region spanning 4117–4366 (YLNRVRGSSA…ASECFIKSDI (250 aa)) is the NiRAN domain. The Nsp12 Interface domain occupies 4372–4470 (RTFDLLAYDF…WNKDLNLHSS (99 aa)). Zn(2+)-binding residues include H4401, C4407, C4412, C4416, and C4593. The 568-residue stretch at 4471-5038 (RLTINELLQF…SMYEQSSVLQ (568 aa)) folds into the Nsp12 RNA-dependent RNA polymerase domain. A rdRp Fingers N-ter region spans residues 4473–4687 (TINELLQFCA…HQKHLKSIVN (215 aa)). The interval 4688 to 4726 (TRGASVVIGTTKFYGGWDNMLKTLIKDVENPHLMGWDYP) is rdRp Palm N-ter. The region spanning 4718-4880 (PHLMGWDYPK…CYNSEYAALG (163 aa)) is the RdRp catalytic domain. The rdRp Fingers C-ter stretch occupies residues 4727–4785 (KCDRALPNMIRMISAMILGSKHVNCCSSSDRYYRLCNELAQVLTEMVYSNGGFYVKPGG). Zn(2+) is bound by residues H4748, C4751, and C4752. The rdRp Palm C-ter stretch occupies residues 4786 to 4921 (TTSGDATTAY…NKGPHEFCSQ (136 aa)). Residues S4865, D4866, and D4867 contribute to the active site. The segment at 4922-5038 (HTMQIVDKDG…SMYEQSSVLQ (117 aa)) is rdRp Thumb. Positions 5039 to 5151 (SAGLCVVCSS…DDFNTLATSD (113 aa)) constitute a CV ZBD domain. Zn(2+)-binding residues include C5043, C5046, C5054, C5057, C5064, C5067, H5071, H5077, C5088, C5093, C5110, and H5113. The region spanning 5296–5477 (NIHEDYSNLI…MCVLKPDIFL (182 aa)) is the (+)RNA virus helicase ATP-binding domain. 5321–5328 (GPPGSGKS) provides a ligand contact to ATP. A (+)RNA virus helicase C-terminal domain is found at 5478 to 5647 (HKCYRCPAEI…DGCGLFKDCY (170 aa)). Positions 5707–5921 (LFCTRDFAMR…RCLAIHDCFV (215 aa)) constitute an ExoN domain. Catalysis depends on residues D5725, E5727, and E5826. C5842, C5844, C5860, H5863, H5891, C5895, and H5898 together coordinate Zn(2+). Catalysis depends on residues H5902 and D5907. Position 5913 (C5913) interacts with Zn(2+). Positions 5930 to 6151 (YPFIANEQAI…NLWQTFKNSN (222 aa)) constitute an N7-MTase domain. 5965–5971 (DVGNPKG) is an S-adenosyl-L-methionine binding site. The interval 6042–6056 (CNGGSLYVNNHAFHT) is gpppA-binding. Positions 6080, 6097, 6108, and 6111 each coordinate Zn(2+). The 61-residue stretch at 6154 to 6214 (GLENIAYNVV…NVAFELYAKR (61 aa)) folds into the Nsp15 N-terminal oligomerization domain. Residues 6215–6332 (KVGLTPPLTI…IYTRKDGAFV (118 aa)) enclose the AV-Nsp11N/CoV-Nsp15M domain. Positions 6349 to 6489 (QPRSNMEEDF…KDHKVQTFYP (141 aa)) constitute a NendoU domain. Residues H6379, H6394, K6435, K6537, D6621, K6661, and E6694 contribute to the active site. Residues 6493–6789 (SAEWKCGYSM…VVCGFSNHLV (297 aa)) form the Nidovirus-type SAM-dependent 2'-O-MTase domain.

This sequence belongs to the coronaviruses polyprotein 1ab family. 3CL-PRO exists as monomer and homodimer. Eight copies of nsp7 and eight copies of nsp8 assemble to form a heterohexadecamer. Nsp9 is a dimer. Nsp10 forms a dodecamer. Mn(2+) is required as a cofactor. Post-translationally, specific enzymatic cleavages in vivo by its own proteases yield mature proteins. 3CL-PRO and PL-PRO proteinases are autocatalytically processed.

It localises to the host membrane. Its subcellular location is the host cytoplasm. It is found in the host perinuclear region. The protein localises to the host endoplasmic reticulum-Golgi intermediate compartment. The enzyme catalyses Thiol-dependent hydrolysis of ester, thioester, amide, peptide and isopeptide bonds formed by the C-terminal Gly of ubiquitin (a 76-residue protein attached to proteins as an intracellular targeting signal).. The catalysed reaction is RNA(n) + a ribonucleoside 5'-triphosphate = RNA(n+1) + diphosphate. It carries out the reaction ATP + H2O = ADP + phosphate + H(+). It catalyses the reaction a 5'-end diphospho-ribonucleoside in mRNA + GTP + H(+) = a 5'-end (5'-triphosphoguanosine)-ribonucleoside in mRNA + diphosphate. The enzyme catalyses a 5'-end (N(7)-methyl 5'-triphosphoguanosine)-ribonucleoside in mRNA + S-adenosyl-L-methionine = a 5'-end (N(7)-methyl 5'-triphosphoguanosine)-(2'-O-methyl-ribonucleoside) in mRNA + S-adenosyl-L-homocysteine + H(+). The catalysed reaction is uridylyl-uridylyl-ribonucleotide-RNA = a 3'-end uridylyl-2',3'-cyclophospho-uridine-RNA + a 5'-end dephospho-ribonucleoside-RNA. In terms of biological role, the replicase polyprotein of coronaviruses is a multifunctional protein: it contains the activities necessary for the transcription of negative stranded RNA, leader RNA, subgenomic mRNAs and progeny virion RNA as well as proteinases responsible for the cleavage of the polyprotein into functional products. The papain-like proteinase 1 (PLP1) and papain-like proteinase 2 (PLP2) are responsible for the cleavages located at the N-terminus of the replicase polyprotein. In addition, PLP2 possesses a deubiquitinating/deISGylating activity and processes both 'Lys-48'- and 'Lys-63'-linked polyubiquitin chains from cellular substrates. PLP2 also antagonizes innate immune induction of type I interferon by blocking the nuclear translocation of host IRF-3. Functionally, responsible for the majority of cleavages as it cleaves the C-terminus of replicase polyprotein at 11 sites. Recognizes substrates containing the core sequence [ILMVF]-Q-|-[SGACN]. Inhibited by the substrate-analog Cbz-Val-Asn-Ser-Thr-Leu-Gln-CMK. Also contains an ADP-ribose-1''-phosphate (ADRP)-binding function. Its function is as follows. The helicase which contains a zinc finger structure displays RNA and DNA duplex-unwinding activities with 5' to 3' polarity. ATPase activity is strongly stimulated by poly(U), poly(dT), poly(C), poly(dA), but not by poly(G). In terms of biological role, the exoribonuclease acts on both ssRNA and dsRNA in a 3' to 5' direction. Nsp7-nsp8 hexadecamer may possibly confer processivity to the polymerase, maybe by binding to dsRNA or by producing primers utilized by the latter. Functionally, forms a primer, NSP9-pU, which is utilized by the polymerase for the initiation of RNA chains. Interacts with ribosome signal recognition particle RNA (SRP). Together with NSP8, suppress protein integration into the cell membrane, thereby disrupting host immune defenses. Its function is as follows. RNA-directed RNA polymerase that catalyzes the transcription of viral genomic and subgenomic RNAs. Acts in complex with nsp7 and nsp8 to transcribe both the minus and positive strands of genomic RNA. The kinase-like NiRAN domain of NSP12 attaches one or more nucleotides to the amino terminus of NSP9, forming a covalent RNA-protein intermediate that serves as transcription/replication primer. Subgenomic RNAs (sgRNAs) are formed by discontinuous transcription: The polymerase has the ability to pause at transcription-regulating sequences (TRS) and jump to the leader TRS, resulting in a major deletion. This creates a series of subgenomic RNAs that are replicated, transcribed and translated. In addition, Nsp12 is a subunit of the viral RNA capping enzyme that catalyzes the RNA guanylyltransferase reaction for genomic and sub-genomic RNAs. Subsequently, the NiRAN domain transfers RNA to GDP, and forms the core cap structure GpppA-RNA. In terms of biological role, plays a role in viral transcription/replication and prevents the simultaneous activation of host cell dsRNA sensors, such as MDA5/IFIH1, OAS, and PKR. Acts by degrading the 5'-polyuridines generated during replication of the poly(A) region of viral genomic and subgenomic RNAs. Catalyzes a two-step reaction in which a 2'3'-cyclic phosphate (2'3'-cP) is first generated by 2'-O transesterification, which is then hydrolyzed to a 3'-phosphate (3'-P). If not degraded, poly(U) RNA would hybridize with poly(A) RNA tails and activate host dsRNA sensors. This Bat coronavirus 512/2005 (BtCoV) protein is Replicase polyprotein 1ab (rep).